The chain runs to 89 residues: MPLASDVKQKIMSDYATVERDTGSPEVQVAMLTRRISDLTEHLKVHKHDHHSRRGLLLLVGRRRRLLNYLSKTDINRYRALIERLGLRR.

This sequence belongs to the universal ribosomal protein uS15 family. Part of the 30S ribosomal subunit. Forms a bridge to the 50S subunit in the 70S ribosome, contacting the 23S rRNA.

Its function is as follows. One of the primary rRNA binding proteins, it binds directly to 16S rRNA where it helps nucleate assembly of the platform of the 30S subunit by binding and bridging several RNA helices of the 16S rRNA. In terms of biological role, forms an intersubunit bridge (bridge B4) with the 23S rRNA of the 50S subunit in the ribosome. The chain is Small ribosomal subunit protein uS15 from Frankia alni (strain DSM 45986 / CECT 9034 / ACN14a).